Consider the following 188-residue polypeptide: ATP synthase subunit b 2 (188 aa).

Residues 1 to 23 (MAEGHGDANGATAHTAADGGHKA) are disordered. Over residues 8–18 (ANGATAHTAAD) the composition is skewed to low complexity. The chain crosses the membrane as a helical span at residues 37-57 (LVSLLIAFVALYLIVSKIALP).

Belongs to the ATPase B chain family. As to quaternary structure, F-type ATPases have 2 components, F(1) - the catalytic core - and F(0) - the membrane proton channel. F(1) has five subunits: alpha(3), beta(3), gamma(1), delta(1), epsilon(1). F(0) has three main subunits: a(1), b(2) and c(10-14). The alpha and beta chains form an alternating ring which encloses part of the gamma chain. F(1) is attached to F(0) by a central stalk formed by the gamma and epsilon chains, while a peripheral stalk is formed by the delta and b chains.

Its subcellular location is the cell inner membrane. In terms of biological role, f(1)F(0) ATP synthase produces ATP from ADP in the presence of a proton or sodium gradient. F-type ATPases consist of two structural domains, F(1) containing the extramembraneous catalytic core and F(0) containing the membrane proton channel, linked together by a central stalk and a peripheral stalk. During catalysis, ATP synthesis in the catalytic domain of F(1) is coupled via a rotary mechanism of the central stalk subunits to proton translocation. Its function is as follows. Component of the F(0) channel, it forms part of the peripheral stalk, linking F(1) to F(0). The b'-subunit is a diverged and duplicated form of b found in plants and photosynthetic bacteria. The polypeptide is ATP synthase subunit b 2 (atpF2) (Rhodopseudomonas palustris (strain BisB18)).